Consider the following 130-residue polypeptide: Phosphoribosyl-AMP cyclohydrolase (130 aa).

Asp-77 contributes to the Mg(2+) binding site. Cys-78 provides a ligand contact to Zn(2+). Residues Asp-79 and Asp-81 each coordinate Mg(2+). Cys-95 and Cys-102 together coordinate Zn(2+).

It belongs to the PRA-CH family. In terms of assembly, homodimer. Mg(2+) serves as cofactor. Zn(2+) is required as a cofactor.

The protein localises to the cytoplasm. It catalyses the reaction 1-(5-phospho-beta-D-ribosyl)-5'-AMP + H2O = 1-(5-phospho-beta-D-ribosyl)-5-[(5-phospho-beta-D-ribosylamino)methylideneamino]imidazole-4-carboxamide. It functions in the pathway amino-acid biosynthesis; L-histidine biosynthesis; L-histidine from 5-phospho-alpha-D-ribose 1-diphosphate: step 3/9. In terms of biological role, catalyzes the hydrolysis of the adenine ring of phosphoribosyl-AMP. This chain is Phosphoribosyl-AMP cyclohydrolase, found in Pseudomonas putida (strain ATCC 700007 / DSM 6899 / JCM 31910 / BCRC 17059 / LMG 24140 / F1).